A 353-amino-acid chain; its full sequence is MPSSRTCVGVVFGGASEEHAVSIRSAITVVGALRSEVNNNRFEVIAIYIDQRGRWWPAGVAEAVLKQGQPAKPEQLSTPLAPQGFTKLPEGSERVQVWYPVLHGPNGEDGTVQGLFTLMGQPFVGSGVLGSALSMDKLAMKAAFAAAGLPQVPYFAVDAADLLDTESRQGVAKNLEAKLKYPCFVKPANLGSSVGISKAQNRNELLIGLDKAASLDRRIVVEQGVSARELECAVLGKRELQTSVVGEICFDADWYDYDTKYSENCSHTLIPAPLPEGVEAQIRTLALQACRCVAAHGMARVDFFYNAARNEIWLNEINTLPGFTSQSMYPMLWEASGVTLEELVSQLVITAGE.

One can recognise an ATP-grasp domain in the interval 141–349; it reads KAAFAAAGLP…LEELVSQLVI (209 aa). An ATP-binding site is contributed by 176–231; sequence EAKLKYPCFVKPANLGSSVGISKAQNRNELLIGLDKAASLDRRIVVEQGVSARELE. Residues D302, E316, and N318 each contribute to the Mg(2+) site.

It belongs to the D-alanine--D-alanine ligase family. The cofactor is Mg(2+). It depends on Mn(2+) as a cofactor.

The protein resides in the cytoplasm. It catalyses the reaction 2 D-alanine + ATP = D-alanyl-D-alanine + ADP + phosphate + H(+). The protein operates within cell wall biogenesis; peptidoglycan biosynthesis. Its function is as follows. Cell wall formation. The protein is D-alanine--D-alanine ligase of Prochlorococcus marinus (strain MIT 9303).